Reading from the N-terminus, the 148-residue chain is MYQPNFSTICNHNRLKRIDDNFVRCLDCGLSLINQVKILPNKTRQDFSKENKSFLRNFDRNFSNLIEQVDEESSVPTYKYYTDRKWLNLIKINNIVQFQTNPPKYEVFINGEKSYLTQKQIDRIIQTLGVIHIDEDQYNYIARSMRKN.

This is an uncharacterized protein from Acanthamoeba polyphaga mimivirus (APMV).